A 353-amino-acid polypeptide reads, in one-letter code: Putative glycosyltransferase TagX (353 aa).

Belongs to the glycosyltransferase 2 family.

This Staphylococcus aureus (strain COL) protein is Putative glycosyltransferase TagX (tagX).